Here is a 227-residue protein sequence, read N- to C-terminus: Homeobox-leucine zipper protein ATHB-54 (227 aa).

Residues 65–124 constitute a DNA-binding region (homeobox); that stretch reads EITKKRKLTPIQLRLLEESFEEEKRLEPDRKLWLAEKLGLQPSQVAVWFQNRRARYKTKQ. The interval 125–153 is leucine-zipper; that stretch reads LEHDCDSLKASYAKLKTDWDILFVQNQTL. The disordered stretch occupies residues 175-198; it reads IERKRLGEEGSSVKSDNTQYSEEE.

It belongs to the HD-ZIP homeobox family. Class I subfamily. In terms of tissue distribution, predominantly expressed in flowers and siliques.

The protein localises to the nucleus. Probable transcription factor. This is Homeobox-leucine zipper protein ATHB-54 (ATHB-54) from Arabidopsis thaliana (Mouse-ear cress).